We begin with the raw amino-acid sequence, 310 residues long: Malate dehydrogenase (310 aa).

NAD(+)-binding positions include 7 to 12 (GAGNVG) and Asp32. Positions 81 and 87 each coordinate substrate. Residues Asn94 and 117–119 (VSN) each bind NAD(+). Substrate-binding residues include Asn119 and Arg150. His174 (proton acceptor) is an active-site residue.

The protein belongs to the LDH/MDH superfamily. MDH type 3 family.

The enzyme catalyses (S)-malate + NAD(+) = oxaloacetate + NADH + H(+). Catalyzes the reversible oxidation of malate to oxaloacetate. This Chlorobium luteolum (strain DSM 273 / BCRC 81028 / 2530) (Pelodictyon luteolum) protein is Malate dehydrogenase.